A 94-amino-acid polypeptide reads, in one-letter code: UPF0235 protein TON_0641 (94 aa).

Belongs to the UPF0235 family.

The sequence is that of UPF0235 protein TON_0641 from Thermococcus onnurineus (strain NA1).